The following is a 371-amino-acid chain: Conglutinin (371 aa).

Positions 1-20 (MLLLPLSVLLLLTQPWRSLG) are cleaved as a signal peptide. The Collagen-like domain maps to 46-216 (GLPGHDGQDG…TGAKGESGLA (171 aa)). Residues 47-215 (LPGHDGQDGR…ETGAKGESGL (169 aa)) are disordered. Over residues 51 to 65 (DGQDGRECPHGEKGD) the composition is skewed to basic and acidic residues. Lys63 carries the post-translational modification 5-hydroxylysine. The span at 71 to 83 (PAGRAGRPGWVGP) shows a compositional bias: low complexity. Pro78 bears the 4-hydroxyproline mark. Lys87 is modified (5-hydroxylysine). 4-hydroxyproline is present on Pro96. Position 99 is a 5-hydroxylysine (Lys99). Pro108, Pro111, Pro129, and Pro132 each carry 4-hydroxyproline. Residues Lys135 and Lys141 each carry the 5-hydroxylysine modification. A compositionally biased stretch (gly residues) spans 139–148 (GPKGGVGAPG). 4-hydroxyproline occurs at positions 147 and 153. Residues Lys159 and Lys162 each carry the 5-hydroxylysine modification. A 4-hydroxyproline mark is found at Pro171 and Pro195. Position 198 is a 5-hydroxylysine (Lys198). The short motif at 201–203 (RGD) is the Cell attachment site element. The region spanning 273 to 371 (QLCREAKGQL…SKQLLVICEF (99 aa)) is the C-type lectin domain. Cystine bridges form between Cys275/Cys369 and Cys347/Cys361. Asn337 is a glycosylation site (N-linked (GlcNAc...) asparagine).

It belongs to the SFTPD family. In terms of assembly, oligomeric complex of 4 set of homotrimers. Post-translationally, the hydroxylysines may be O-glycosylated.

Functionally, calcium-dependent lectin-like protein which binds to a yeast cell wall extract and immune complexes through the complement component (C3bi). It is capable of binding non-reducing terminal N-acetylglucosamine, mannose, and fucose residues. The sequence is that of Conglutinin (CGN1) from Bos taurus (Bovine).